The following is a 438-amino-acid chain: Ribosomal protein uS12 methylthiotransferase RimO (438 aa).

One can recognise an MTTase N-terminal domain in the interval 1 to 115 (MKYFILSLGC…LDKLLADLGE (115 aa)). Residues C10, C46, C78, C150, C154, and C157 each coordinate [4Fe-4S] cluster. One can recognise a Radical SAM core domain in the interval 136-366 (KSNEVYRYIK…MEVQQEISLN (231 aa)). The TRAM domain occupies 369–437 (KALVGKKIPV…IYDLKGEFIN (69 aa)).

Belongs to the methylthiotransferase family. RimO subfamily. [4Fe-4S] cluster serves as cofactor.

It is found in the cytoplasm. It catalyses the reaction L-aspartate(89)-[ribosomal protein uS12]-hydrogen + (sulfur carrier)-SH + AH2 + 2 S-adenosyl-L-methionine = 3-methylsulfanyl-L-aspartate(89)-[ribosomal protein uS12]-hydrogen + (sulfur carrier)-H + 5'-deoxyadenosine + L-methionine + A + S-adenosyl-L-homocysteine + 2 H(+). Its function is as follows. Catalyzes the methylthiolation of an aspartic acid residue of ribosomal protein uS12. This Carboxydothermus hydrogenoformans (strain ATCC BAA-161 / DSM 6008 / Z-2901) protein is Ribosomal protein uS12 methylthiotransferase RimO.